A 306-amino-acid polypeptide reads, in one-letter code: MWFRNLLVYRLTQDLQLDADSLEKALGEKSARPCASQELTTYGFTAPFGKGPDAPLVHVSQDFFLISARKEERILPGSVVRDALKEKVDEIEAQQMRKVYKKERDQLKDEIVQTLLPRAFIRRSSTFAAIAPSLGLILVDSASAKKAEDLLSTLREALGSLPVRPLSVKVAPTATLTDWVKTQEAAGDFHVLDECELRDTHEDGGVVRCKRQDLTSEEIQLHLTAGKLVTQLSLAWSDKLSFVLDDKLAVKRLRFEDLLQEQAEKDGGEDALGQLDASFTLMMLTFAEFLPALFEALGGEEIPQGV.

This sequence belongs to the RdgC family.

Its subcellular location is the cytoplasm. It is found in the nucleoid. May be involved in recombination. This is Recombination-associated protein RdgC from Pseudomonas aeruginosa (strain ATCC 15692 / DSM 22644 / CIP 104116 / JCM 14847 / LMG 12228 / 1C / PRS 101 / PAO1).